The primary structure comprises 50 residues: Photosystem II reaction center protein M (50 aa).

A helical transmembrane segment spans residues 7-27 (GFVASLLFVGVPTIFLIGLFI).

It belongs to the PsbM family. PSII is composed of 1 copy each of membrane proteins PsbA, PsbB, PsbC, PsbD, PsbE, PsbF, PsbH, PsbI, PsbJ, PsbK, PsbL, PsbM, PsbT, PsbX, PsbY, Psb30/Ycf12, peripheral proteins PsbO, CyanoQ (PsbQ), PsbU, PsbV and a large number of cofactors. It forms dimeric complexes.

The protein resides in the cellular thylakoid membrane. One of the components of the core complex of photosystem II (PSII). PSII is a light-driven water:plastoquinone oxidoreductase that uses light energy to abstract electrons from H(2)O, generating O(2) and a proton gradient subsequently used for ATP formation. It consists of a core antenna complex that captures photons, and an electron transfer chain that converts photonic excitation into a charge separation. This subunit is found at the monomer-monomer interface. This chain is Photosystem II reaction center protein M, found in Prochlorococcus marinus (strain MIT 9301).